Here is a 305-residue protein sequence, read N- to C-terminus: Methionyl-tRNA formyltransferase (305 aa).

Residue 111 to 114 (SLLP) participates in (6S)-5,6,7,8-tetrahydrofolate binding.

The protein belongs to the Fmt family.

It carries out the reaction L-methionyl-tRNA(fMet) + (6R)-10-formyltetrahydrofolate = N-formyl-L-methionyl-tRNA(fMet) + (6S)-5,6,7,8-tetrahydrofolate + H(+). Functionally, attaches a formyl group to the free amino group of methionyl-tRNA(fMet). The formyl group appears to play a dual role in the initiator identity of N-formylmethionyl-tRNA by promoting its recognition by IF2 and preventing the misappropriation of this tRNA by the elongation apparatus. This is Methionyl-tRNA formyltransferase from Campylobacter jejuni subsp. jejuni serotype O:23/36 (strain 81-176).